We begin with the raw amino-acid sequence, 4015 residues long: Hybrid PKS-NRPS synthetase iccA (4015 aa).

Positions 1 to 12 are enriched in polar residues; the sequence is MAANDSNNQTKP. Residues 1 to 20 form a disordered region; it reads MAANDSNNQTKPQLPEEPVA. The Ketosynthase family 3 (KS3) domain occupies 16–445; the sequence is EEPVAIVGSS…GTNAHVIIES (430 aa). Residues C190, H327, and H365 each act as for beta-ketoacyl synthase activity in the active site. Residues 560-885 form a malonyl-CoA:ACP transacylase (MAT) domain region; that stretch reads VFTGQGAQWP…LKRGASDVEA (326 aa). Residues 954 to 1091 form an N-terminal hotdog fold region; that stretch reads HELLGRRTPD…GRLSVHLGEA (138 aa). Positions 954 to 1260 are dehydratase (DH) domain; sequence HELLGRRTPD…TTKMVGEQDA (307 aa). The region spanning 954 to 1261 is the PKS/mFAS DH domain; that stretch reads HELLGRRTPD…TKMVGEQDAS (308 aa). Residue H986 is the Proton acceptor; for dehydratase activity of the active site. A C-terminal hotdog fold region spans residues 1106–1261; that stretch reads LVNINTDRAY…TKMVGEQDAS (156 aa). Catalysis depends on D1165, which acts as the Proton donor; for dehydratase activity. Residues 1400–1598 form a methyltransferase (MT) domain region; that stretch reads KDDMLNRFYM…YSGADMVVHD (199 aa). Residues 2120-2261 form a ketoreductase (KR) domain region; sequence KTYLMVGAAG…STATTIGNIG (142 aa). Residues 2379-2405 are disordered; sequence STLQNDSSQTGGTGNGSSVRRQVEEAQ. The Carrier 1 domain maps to 2409-2488; that stretch reads EAVDAVLDGF…QICTTAAKKV (80 aa). The residue at position 2448 (S2448) is an O-(pantetheine 4'-phosphoryl)serine. Over residues 2498 to 2515 the composition is skewed to basic and acidic residues; it reads EDAVAEEGGREAASKKEP. 2 disordered regions span residues 2498–2529 and 2545–2597; these read EDAVAEEGGREAASKKEPAPAASAPTPAPVAP and TISE…VRDE. Positions 2553-2569 are enriched in low complexity; sequence SAFSNKGSSSSATGASS. Basic and acidic residues predominate over residues 2582-2597; it reads TSKDQSHVRPETVRDE. Residues 2598–3029 are condensation (C) domain; it reads RMSPAQARIW…HVKLKDCVIH (432 aa). The interval 3063-3459 is adenylation (A) (KR) domain; it reads LKSPKNAAIQ…GTLLCLGRLD (397 aa). The tract at residues 3063-3459 is reductase (RED) domain; it reads LKSPKNAAIQ…GTLLCLGRLD (397 aa). One can recognise a Carrier 2 domain in the interval 3572–3651; that stretch reads EKMNIREGEL…EMALCVDEQR (80 aa). S3611 carries the post-translational modification O-(pantetheine 4'-phosphoryl)serine.

In the C-terminal section; belongs to the NRP synthetase family.

It catalyses the reaction L-tyrosine + holo-[ACP] + 7 malonyl-CoA + acetyl-CoA + 8 AH2 + 2 S-adenosyl-L-methionine + ATP + 4 H(+) = N-[(4E,6E,10S,12Z,14E)-6,10-dimethyl-3-oxohexadeca-4,6,12,14-tetraenoyl]-L-tyrosyl-[ACP] + 8 A + AMP + 2 S-adenosyl-L-homocysteine + 7 CO2 + diphosphate + 8 CoA + 6 H2O. It participates in mycotoxin biosynthesis. Hybrid PKS-NRPS synthetase; part of the gene cluster that mediates the biosynthesis of ilicicolin H, a 4-hydroxy-2-pyridonealkaloid that has potent and broad antifungal activities by inhibiting the mitochondrial respiration chain. IccA assembles the backbone of ilicicolin H. The PKS portion and trans-acting enoyl reductase iccB work together to construct an octaketide, and two methyl groups are introduced by the MT domain during the chain assembly. The nascent chain is then condensed with tyrosine, catalyzed by the C domain, and the resulting PKS-NRPS hybrid is offloaded by the RED domain to form an advanced tetramic acid intermediate. The biosynthesis of ilicicolin H starts with formation of the tetramic acid by the hybrid PKS-NRPS synthetase iccA with the partnering trans-enoyl reductase iccB since iccA lacks a designated enoylreductase (ER) domain. The cytochrome P450 monooxygenase iccC then catalyzes the ring expansion of the tetramate to the acyclic 2-pyridone. The pericyclase iccD further converts the acyclic 2-pyridone into 8-epi-ilicicolin H. Finally, the epimerase iccE converts 8-epi-ilicicolin H into ilicicolin H via epimerization. IccA to iccE are sufficient for ilicicolin H biosynthesis and the roles of the remaining enzymes, iccF, iccG and iccH within the pathway have still to be determined. The sequence is that of Hybrid PKS-NRPS synthetase iccA from Talaromyces variabilis (Penicillium variabile).